Consider the following 551-residue polypeptide: uncharacterized protein (551 aa).

This sequence belongs to the GSP E family.

This is an uncharacterized protein from Methanocaldococcus jannaschii (strain ATCC 43067 / DSM 2661 / JAL-1 / JCM 10045 / NBRC 100440) (Methanococcus jannaschii).